Reading from the N-terminus, the 442-residue chain is Chromosomal replication initiator protein DnaA (442 aa).

Residues 1-84 (MSVLWSHCIS…LEIGSRAAEA (84 aa)) are domain I, interacts with DnaA modulators. Residues 84 to 105 (AAQMRSANPPRKTAPARKQVPN) form a domain II region. Residues 106–322 (NLNSAFIFGN…GALRRVIANA (217 aa)) form a domain III, AAA+ region region. 4 residues coordinate ATP: Gly150, Gly152, Lys153, and Thr154. The segment at 323-442 (QFTGRPITLE…FSNLLRILSN (120 aa)) is domain IV, binds dsDNA.

The protein belongs to the DnaA family. As to quaternary structure, oligomerizes as a right-handed, spiral filament on DNA at oriC.

The protein resides in the cytoplasm. Its function is as follows. Plays an essential role in the initiation and regulation of chromosomal replication. ATP-DnaA binds to the origin of replication (oriC) to initiate formation of the DNA replication initiation complex once per cell cycle. Binds the DnaA box (a 9 base pair repeat at the origin) and separates the double-stranded (ds)DNA. Forms a right-handed helical filament on oriC DNA; dsDNA binds to the exterior of the filament while single-stranded (ss)DNA is stabiized in the filament's interior. The ATP-DnaA-oriC complex binds and stabilizes one strand of the AT-rich DNA unwinding element (DUE), permitting loading of DNA polymerase. After initiation quickly degrades to an ADP-DnaA complex that is not apt for DNA replication. Binds acidic phospholipids. The polypeptide is Chromosomal replication initiator protein DnaA (Methylococcus capsulatus (strain ATCC 33009 / NCIMB 11132 / Bath)).